A 593-amino-acid polypeptide reads, in one-letter code: MDKIRNFCIIAHIDHGKSTLADRLLEFTNTIQVTEGQMLDDMDLEKERGITIKSHAIQMEYTYKGEKYILNLIDTPGHVDFSYEVSRSIAACEGALLIVDASQGVQAQTISNLYMAIEHDLEIIPIINKCDMASAMPEEVEDEIVELLGCKRDEIIRASGKTGMGVEEILAAVIERIPHPQGDESAPLQALIFDSVFNSFRGIIAYFKITNGVIRAGDKVKFFNTGKEYVADEIGVLKMEMVPRKELRTGDVGYIISGIKTSKEVKVGDTITHVARPCDKAIAGFEEVKPMVFAGVYPIEAEEFEDLRASLEKLQLNDASLTFQPESSLALGFGFRCGFLGLLHMEIVQERLDREFDMNVITTVPNVSYHIYDKQGNMTEVHNPGGMPDPTMIDHIEEPYIKASIITTTDYIGPIMTLCLGKRGELLKQEYISGNRVELFYNMPLGEIVIDFYDRLKSISKGYASFDYHPDGFRPSKLVKLDILLNGESVDALSTLTHFDNAYDMGRRMCEKLKELIPRQQFEIAIQAAIGAKIIARETIKAVRKDVTAKCYGGDISRKRKLLEKQKKGKKRMKQIGNVEVPQKAFLAVLKLD.

The region spanning 2–181 (DKIRNFCIIA…AVIERIPHPQ (180 aa)) is the tr-type G domain. Residues 14-19 (DHGKST) and 128-131 (NKCD) contribute to the GTP site.

The protein belongs to the TRAFAC class translation factor GTPase superfamily. Classic translation factor GTPase family. LepA subfamily.

The protein resides in the cell inner membrane. The catalysed reaction is GTP + H2O = GDP + phosphate + H(+). Required for accurate and efficient protein synthesis under certain stress conditions. May act as a fidelity factor of the translation reaction, by catalyzing a one-codon backward translocation of tRNAs on improperly translocated ribosomes. Back-translocation proceeds from a post-translocation (POST) complex to a pre-translocation (PRE) complex, thus giving elongation factor G a second chance to translocate the tRNAs correctly. Binds to ribosomes in a GTP-dependent manner. The sequence is that of Elongation factor 4 from Bacteroides fragilis (strain ATCC 25285 / DSM 2151 / CCUG 4856 / JCM 11019 / LMG 10263 / NCTC 9343 / Onslow / VPI 2553 / EN-2).